The sequence spans 37 residues: Putative preoptic regulatory factor 1 (37 aa).

Propeptides lie at residues 1-7 (MPYSLQP) and 18-37 (FPLC…PPDL).

Belongs to the GnRH family. In terms of tissue distribution, preoptic area and testis.

It localises to the secreted. Its function is as follows. Precursor for a gonadotropin regulatory hormone (GNRH) related decapeptide. The chain is Putative preoptic regulatory factor 1 (Porf1) from Rattus norvegicus (Rat).